Here is a 107-residue protein sequence, read N- to C-terminus: Early E3A 12.5 kDa protein (107 aa).

It belongs to the adenoviridae E3A-2 family.

Functionally, not yet known. This chain is Early E3A 12.5 kDa protein, found in Human adenovirus C serotype 5 (HAdV-5).